Here is a 1010-residue protein sequence, read N- to C-terminus: PHD finger protein 20 (1010 aa).

Tudor domains follow at residues His-4–Glu-69 and Gly-83–Arg-147. Disordered stretches follow at residues Ile-142–Leu-373 and Glu-483–Lys-609. A compositionally biased stretch (basic and acidic residues) spans Arg-147–Val-246. Position 159 is a phosphoserine (Ser-159). The a.T hook DNA-binding region spans Lys-257–Thr-269. Residues Thr-267–Pro-280 show a composition bias toward polar residues. Composition is skewed to basic and acidic residues over residues Lys-292 to Arg-325, Glu-483 to Gly-493, and Ala-525 to Arg-541. A C2H2-type zinc finger spans residues Phe-455 to Ser-485. Residues Val-542–Thr-554 show a composition bias toward basic residues. The segment at Arg-657 to Pro-703 adopts a PHD-type zinc-finger fold. Residues Arg-804 to Ser-827 form a disordered region. At Lys-841 the chain carries N6-acetyllysine. Phosphoserine occurs at positions 876 and 878. Positions Leu-877–Lys-902 are disordered. Residues Asp-886–Lys-902 are compositionally biased toward basic and acidic residues.

In terms of assembly, homodimer; disulfide-linked. Component of some MLL1/MLL complex, at least composed of the core components KMT2A/MLL1, ASH2L, HCFC1, WDR5 and RBBP5, as well as the facultative components BACC1, CHD8, E2F6, HSP70, INO80C, KANSL1, LAS1L, MAX, MCRS1, MGA, MYST1/MOF, PELP1, PHF20, PRP31, RING2, RUVB1/TIP49A, RUVB2/TIP49B, SENP3, TAF1, TAF4, TAF6, TAF7, TAF9 and TEX10. Component of the NSL complex at least composed of MOF/KAT8, KANSL1, KANSL2, KANSL3, MCRS1, PHF20, OGT1/OGT, WDR5 and HCFC1. Post-translationally, ubiquitinated by TRIM26; leading to proteasomal degradation.

It is found in the nucleus. Functionally, contributes to methyllysine-dependent p53/TP53 stabilization and up-regulation after DNA damage. Methyllysine-binding protein, component of the MOF histone acetyltransferase protein complex. Not required for maintaining the global histone H4 'Lys-16' acetylation (H4K16ac) levels or locus specific histone acetylation, but instead works downstream in transcriptional regulation of MOF target genes. As part of the NSL complex it may be involved in acetylation of nucleosomal histone H4 on several lysine residues. In Mus musculus (Mouse), this protein is PHD finger protein 20 (Phf20).